Here is a 482-residue protein sequence, read N- to C-terminus: Malvidin galactosylase UGT88C3 (482 aa).

Catalysis depends on histidine 16, which acts as the Proton acceptor. Aspartate 117 (charge relay) is an active-site residue. Positions 279, 345, 349, 366, 370, 371, and 374 each coordinate UDP.

Belongs to the UDP-glycosyltransferase family. Highly expressed in leaves, sheaths, pistils and embryos, observed in stems, stem nodes and panicles, and present at low levels in roots.

The protein localises to the endoplasmic reticulum. It is found in the nucleus. The catalysed reaction is malvidin + UDP-alpha-D-galactose = malvidin 3-O-beta-D-galactoside + UDP + H(+). It participates in pigment biosynthesis; anthocyanin biosynthesis. Its function is as follows. UDP-glycosyltransferase which uses UDP-galactose and malvidin as substrates to catalyze the biosynthesis of malvidin 3-O-galactoside, an anthocyanin conferring purple pigmentation. The protein is Malvidin galactosylase UGT88C3 of Oryza sativa subsp. japonica (Rice).